A 186-amino-acid chain; its full sequence is Imidazoleglycerol-phosphate dehydratase (186 aa).

This sequence belongs to the imidazoleglycerol-phosphate dehydratase family.

Its subcellular location is the cytoplasm. The enzyme catalyses D-erythro-1-(imidazol-4-yl)glycerol 3-phosphate = 3-(imidazol-4-yl)-2-oxopropyl phosphate + H2O. It participates in amino-acid biosynthesis; L-histidine biosynthesis; L-histidine from 5-phospho-alpha-D-ribose 1-diphosphate: step 6/9. This is Imidazoleglycerol-phosphate dehydratase from Pyrobaculum aerophilum (strain ATCC 51768 / DSM 7523 / JCM 9630 / CIP 104966 / NBRC 100827 / IM2).